Here is an 822-residue protein sequence, read N- to C-terminus: Sodium/hydrogen exchanger 1 (822 aa).

The Extracellular segment spans residues 1–102 (MMLRWSGIWG…FPVLDIDYLH (102 aa)). The segment at 41–73 (SPTANTIRGAEPPRERSIGDVTTAPSEPVHHPD) is disordered. Residues 103–125 (VRTPFEISLWILLACLMKIGFHV) traverse the membrane as a helical segment. Over 126-134 (IPTISSIVP) the chain is Cytoplasmic. A helical transmembrane segment spans residues 135-152 (ESCLLIVVGLLVGGLIKG). The Extracellular segment spans residues 153-162 (VGETPPFLQS). A helical transmembrane segment spans residues 163 to 180 (DVFFLFLLPPIILDAGYF). Over 181-190 (LPLRQFTENL) the chain is Cytoplasmic. A helical transmembrane segment spans residues 191–219 (GTILIFAVVGTLWNAFFLGGLLYAVCLVG). Residues 220–226 (GEQINNI) are Extracellular-facing. Residues 227-253 (GLLDTLLFGSIISAVDPVAVVAVFEEI) form a helical membrane-spanning segment. Topologically, residues 254–256 (HIN) are cytoplasmic. The chain crosses the membrane as a helical span at residues 257–287 (ELLHILVFGESLLNDAVTVVLYHLFEEFANY). Residues 288–291 (DSIG) lie on the Extracellular side of the membrane. A helical transmembrane segment spans residues 292 to 326 (ISDIFLGFLSFFVVALGGVFVGVVYGVIAAFTSRF). The Cytoplasmic segment spans residues 327-332 (TSHIRV). A helical transmembrane segment spans residues 333–345 (IEPLFVFLYSYMA). The Extracellular portion of the chain corresponds to 346-354 (YLSAELFHL). A helical membrane pass occupies residues 355–375 (SGIMALIASGVVMRPYVEANI). Residues 376–377 (SH) are Cytoplasmic-facing. Residues 378–408 (KSHTTIKYFLKMWSSVSETLIFIFLGVSTVA) traverse the membrane as a helical segment. Residues 409–414 (GSHQWN) lie on the Extracellular side of the membrane. The chain crosses the membrane as a helical span at residues 415–442 (WTFVISTLLFCLIARVLGVLVLTWFINK). The Cytoplasmic segment spans residues 443–448 (FRIVKL). A helical membrane pass occupies residues 449–473 (TPKDQFIIAYGGLRGAIAFSLGYLM). Over 474 to 479 (DKKHFP) the chain is Extracellular. The helical transmembrane segment at 480 to 509 (MCDLFLTAIITVIFFTVFVQGMTIRPLVDL) threads the bilayer. Residues 507–549 (VDLLAVKKKQETKRSINEEIHTQFLDHLLTGIEDICGHYGHHH) form an interaction with TESC region. At 510 to 822 (LAVKKKQETK…EGEPFIPKGE (313 aa)) the chain is on the cytoplasmic side. The segment at 513–520 (KKKQETKR) is PI(4,5)P2-binding region. Positions 519 to 549 (KRSINEEIHTQFLDHLLTGIEDICGHYGHHH) are interaction with CHP2. A confers pH-dependent PI(4,5)P2 binding region spans residues 544 to 549 (HYGHHH). Residues 556–564 (RFNKKYVKK) are PI(4,5)P2-binding region. Phosphoserine is present on residues S603 and S606. T607 carries the post-translational modification Phosphothreonine. A phosphoserine mark is found at S609 and S652. The tract at residues 637–822 (KILRSNLQKT…EGEPFIPKGE (186 aa)) is interaction with TESC. Residues 637–822 (KILRSNLQKT…EGEPFIPKGE (186 aa)) are interaction with CALM1. The segment at 688 to 691 (LTVP) is interaction with PPP3CA. Phosphoserine is present on residues S697, S701, and S707. The interaction with PPP3CA stretch occupies residues 719–724 (PVITID). 3 positions are modified to phosphoserine: S727, S730, and S733. The disordered stretch occupies residues 752–822 (PTRLTRGEED…EGEPFIPKGE (71 aa)). At T756 the chain carries Phosphothreonine. Positions 759–768 (EEDEDEDEDG) are enriched in acidic residues. A Phosphothreonine modification is found at T786. S792, S794, and S803 each carry phosphoserine.

The protein belongs to the monovalent cation:proton antiporter 1 (CPA1) transporter (TC 2.A.36) family. As to quaternary structure, homodimer; dimerization is crucial for its function. Oligomer. Interacts with CALM in a calcium-dependent manner. Interacts with TESC. Interacts (via the juxtamembrane region of the cytoplasmic C-terminal domain) with CHP1; the interaction occurs at the plasma membrane in a calcium-dependent manner. Interacts with CHP2; the interaction occurs in a calcium-dependent manner. Interacts with EZR; regulates the cytoskeletal interactions of SLC9A1 and promotes stress fiber formation. Ubiquitinated, leading to its degradation by the proteasome. Ubiquitination is reduced by CHP1. Post-translationally, O-glycosylated. In terms of processing, palmitoylated; may play a major role in SLC9A1 regulation. Phosphorylation at Thr-786 increases SLC9A1 activity. Specifically dephosphorylated at Thr-786 by PPP3CA that negatively regulates SLC9A1 activity. Phosphorylation at Ser-652 by AKT1 reduces SLC9A1 binding to CALM1.

The protein resides in the cell membrane. The protein localises to the basolateral cell membrane. It catalyses the reaction Na(+)(in) + H(+)(out) = Na(+)(out) + H(+)(in). The enzyme catalyses Li(+)(out) + H(+)(in) = Li(+)(in) + H(+)(out). The catalysed reaction is Li(+)(in) + Na(+)(out) = Li(+)(out) + Na(+)(in). Activated at acidic pHs. Inhibited by amiloride and 5-amino-substituted derivatives. Inhibited by cariporide and eniporide. Phosphatidylinositol 4,5-bisphosphate (PI(4,5)P2) and phosphatidylinositol 3,4,5-trisphosphate (PI(3,4,5)P3) bind and differentially regulate SLC9A1 activity. Its function is as follows. Electroneutral Na(+) /H(+) antiporter that extrudes Na(+) in exchange for external protons driven by the inward sodium ion chemical gradient, protecting cells from acidification that occurs from metabolism. Exchanges intracellular H(+) ions for extracellular Na(+) in 1:1 stoichiometry. Plays a key role in maintening intracellular pH neutral and cell volume, and thus is important for cell growth, proliferation, migration and survival. In addition, can transport lithium Li(+) and also functions as a Na(+)/Li(+) antiporter. SLC9A1 also functions in membrane anchoring and organization of scaffolding complexes that coordinate signaling inputs. The chain is Sodium/hydrogen exchanger 1 (SLC9A1) from Cricetulus griseus (Chinese hamster).